We begin with the raw amino-acid sequence, 557 residues long: Dihydroxy-acid dehydratase (557 aa).

Residue Asp-78 participates in Mg(2+) binding. Cys-119 serves as a coordination point for [2Fe-2S] cluster. Asp-120 and Lys-121 together coordinate Mg(2+). Residue Lys-121 is modified to N6-carboxylysine. Cys-192 is a [2Fe-2S] cluster binding site. A Mg(2+)-binding site is contributed by Glu-442. Residue Ser-468 is the Proton acceptor of the active site.

It belongs to the IlvD/Edd family. In terms of assembly, homodimer. Requires [2Fe-2S] cluster as cofactor. Mg(2+) is required as a cofactor.

The enzyme catalyses (2R)-2,3-dihydroxy-3-methylbutanoate = 3-methyl-2-oxobutanoate + H2O. It carries out the reaction (2R,3R)-2,3-dihydroxy-3-methylpentanoate = (S)-3-methyl-2-oxopentanoate + H2O. It functions in the pathway amino-acid biosynthesis; L-isoleucine biosynthesis; L-isoleucine from 2-oxobutanoate: step 3/4. The protein operates within amino-acid biosynthesis; L-valine biosynthesis; L-valine from pyruvate: step 3/4. Functions in the biosynthesis of branched-chain amino acids. Catalyzes the dehydration of (2R,3R)-2,3-dihydroxy-3-methylpentanoate (2,3-dihydroxy-3-methylvalerate) into 2-oxo-3-methylpentanoate (2-oxo-3-methylvalerate) and of (2R)-2,3-dihydroxy-3-methylbutanoate (2,3-dihydroxyisovalerate) into 2-oxo-3-methylbutanoate (2-oxoisovalerate), the penultimate precursor to L-isoleucine and L-valine, respectively. This is Dihydroxy-acid dehydratase from Bacillus cereus (strain ATCC 10987 / NRS 248).